We begin with the raw amino-acid sequence, 509 residues long: MKRALISVSDKNGIVPFAEKLVELGVEIISTGGTKAAFEQAGVPVTGIEEVTEFPEMLDGRVKTLHPAIHGGLLARRDTAEHMEAIAAHNIKPIDLVIVNLYPFQETIQKPGVTLEEAIENIDIGGPSMLRSAAKNYAAVTVVVDTADYDAVLTELQEHGATTFETRQRLAAKVFRHTAAYDALIAEYLTNITGETFPEKVTFTYNRKQVLRYGENPHQDAAFYTEPGTIENSISAAKQLHGKELSYNNIRDADAALKIASEFTEPVAVAVKHMNPCGVGVGENIEEAYLKAYEADETSIFGGIVALNKEVDAKTAEHMSKIFLEIVIAPSFSEEAFAILAKKKNIRLLTVPFAGNMEGFEKTSVNGGLLIQANDSLVEDTTSYEVVTEKQPTDSEMKALLAQWKIVKHVKSNAIVVGSDKQTLGIGAGQMNRIGSALIALEQAGEKAKGAVLASDAFFPMDDTVEAAAKSGITAIIQPGGSIKDKESIAMADKYGISMVLTHVRHFKH.

Positions 1–144 (MKRALISVSD…KNYAAVTVVV (144 aa)) constitute an MGS-like domain.

Belongs to the PurH family.

The enzyme catalyses (6R)-10-formyltetrahydrofolate + 5-amino-1-(5-phospho-beta-D-ribosyl)imidazole-4-carboxamide = 5-formamido-1-(5-phospho-D-ribosyl)imidazole-4-carboxamide + (6S)-5,6,7,8-tetrahydrofolate. The catalysed reaction is IMP + H2O = 5-formamido-1-(5-phospho-D-ribosyl)imidazole-4-carboxamide. It participates in purine metabolism; IMP biosynthesis via de novo pathway; 5-formamido-1-(5-phospho-D-ribosyl)imidazole-4-carboxamide from 5-amino-1-(5-phospho-D-ribosyl)imidazole-4-carboxamide (10-formyl THF route): step 1/1. The protein operates within purine metabolism; IMP biosynthesis via de novo pathway; IMP from 5-formamido-1-(5-phospho-D-ribosyl)imidazole-4-carboxamide: step 1/1. The polypeptide is Bifunctional purine biosynthesis protein PurH (Listeria monocytogenes serovar 1/2a (strain ATCC BAA-679 / EGD-e)).